The sequence spans 336 residues: MAENHEVYDVTIIGGGPIGLFAAFYCGMRELKTKVIEFLPRLGGKVSMFFPEKIIRDIGGIPGIAGEQLITQLKEQAATFKPDIVLNQRVTGFERLEDGTIVLESSEGEKHYTRTVILAVGMGTLEVNELDSADASRYSGKNLHYKVEKLDAFRDKHVVISGGGDTAVDWANELEPIAASVTVLHRREEFGGLESSVAKMKRSSVRVLAPYRLKHLNGTGERIESVTICQTESGLSEVIKLDELVINHGFKIDLGPMKDWGLEIEEGRIKADRHMRTNLPGVFVAGDAAHYESKLRLIAGGFTEGPTAVNSAKAYLDPQADQMAMYSTHHKKLVTQ.

The FAD site is built by E37, K45, F50, V90, L125, D287, and T328.

This sequence belongs to the ferredoxin--NADP reductase type 2 family. In terms of assembly, homodimer. The cofactor is FAD.

The catalysed reaction is 2 reduced [2Fe-2S]-[ferredoxin] + NADP(+) + H(+) = 2 oxidized [2Fe-2S]-[ferredoxin] + NADPH. This Bacillus velezensis (strain DSM 23117 / BGSC 10A6 / LMG 26770 / FZB42) (Bacillus amyloliquefaciens subsp. plantarum) protein is Ferredoxin--NADP reductase 1.